Here is a 308-residue protein sequence, read N- to C-terminus: MSNIVLSISTNIQKEVMAYYAANYIERKAAGVIFAAKLPDTSITMYKSGKLMFQGGGAEREAARWGTIEKTPNSKSAIIGAKGDTLPDQFALMSVLGSDETGTGDYFGPMTVAAVYVPSSKIELINELGVKDSKMLSDDYMRKIAPDLRAACVHSVLILRNEKYNSLQAKGYSQGKMKAMMHNKALHNTLAKMAPETPEYILIDQFAERGVYYNYLKNEREIVQESVYFSTKAEQLHVAVATASILARAAFLKEMDRLSDIAGLELMKGASNKVDVQAARIWRKQGEEFLRSITKWHFANTEKARKMI.

The RNase H type-2 domain maps to 93–308 (MSVLGSDETG…ANTEKARKMI (216 aa)). Positions 99, 100, and 204 each coordinate a divalent metal cation.

Belongs to the RNase HII family. RnhC subfamily. The cofactor is Mn(2+). Mg(2+) is required as a cofactor.

The protein resides in the cytoplasm. The enzyme catalyses Endonucleolytic cleavage to 5'-phosphomonoester.. Its function is as follows. Endonuclease that specifically degrades the RNA of RNA-DNA hybrids. The polypeptide is Ribonuclease HIII (Lysinibacillus sphaericus (strain C3-41)).